A 390-amino-acid chain; its full sequence is Homeobox protein Meis1 (390 aa).

The 84-residue stretch at 108 to 191 (GGDVCSSESF…PIDLVIDDRD (84 aa)) folds into the MEIS N-terminal domain. Residues 188-202 (DDRDGGSKSDSEDLT) are compositionally biased toward basic and acidic residues. The interval 188 to 279 (DDRDGGSKSD…KKRNKGRGIF (92 aa)) is disordered. The segment at residues 272 to 334 (RNKGRGIFPK…NARRRIVQPM (63 aa)) is a DNA-binding region (homeobox; TALE-type). The interval 299–329 (YPSEEQKKQLAQDTGLTILQVNNWFINARRR) is interaction with DNA.

Belongs to the TALE/MEIS homeobox family. Interacts with pbx1 isoform b. In the embryo, displays a broad expression pattern with high levels observed in tissues of neural cell fate such as midbrain, hindbrain, dorsal portion of the neural tube, and neural crest-derived branchial arches. Widely expressed in the adult with highest levels in brain and spleen.

It is found in the cytoplasm. Its subcellular location is the nucleus. Functionally, induces expression of a number of neural crest marker genes as part of a heterodimer with isoform b of pbx1, to specify neural crest cell fate. Binds to a highly conserved region in the promoter of the neural crest marker gene zic3. The chain is Homeobox protein Meis1 (meis1) from Xenopus laevis (African clawed frog).